The following is a 1095-amino-acid chain: 1-phosphatidylinositol 4,5-bisphosphate phosphodiesterase (1095 aa).

Positions 319–469 constitute a PI-PLC X-box domain; it reads MEMDQPLAHY…LKRKILIKNK (151 aa). Active-site residues include H334 and H381. Substrate is bound by residues K467 and K469. A disordered region spans residues 487-529; that stretch reads ELKTDDDPEEDASAGKPPEAAAAPAPAPEAAAAAEGAAEGGGG. Residues 500–523 show a composition bias toward low complexity; sequence AGKPPEAAAAPAPAPEAAAAAEGA. Residues 550–666 form the PI-PLC Y-box domain; sequence LSSMVNYAQP…GYLLKPDFMR (117 aa). Substrate contacts are provided by S579 and R606. A C2 domain is found at 666-794; the sequence is RRADKDFDPF…SLRTEANFPM (129 aa). Disordered stretches follow at residues 842–863 and 1000–1030; these read IEEQ…EKKE and QAKM…LREK. Composition is skewed to basic and acidic residues over residues 852-863 and 1007-1030; these read DAGKAKEEEKKE and TAKE…LREK.

In terms of assembly, interacts with inaD. Abundantly expressed in the adult retina.

The catalysed reaction is a 1,2-diacyl-sn-glycero-3-phospho-(1D-myo-inositol-4,5-bisphosphate) + H2O = 1D-myo-inositol 1,4,5-trisphosphate + a 1,2-diacyl-sn-glycerol + H(+). Its function is as follows. The production of the second messenger molecules diacylglycerol (DAG) and inositol 1,4,5-trisphosphate (IP3) is mediated by activated phosphatidylinositol-specific phospholipase C enzymes. Essential component of the phototransduction pathway. Essential downstream component of a hh-signaling pathway which regulates the Duox-dependent gut immune response to bacterial uracil; required for the activation of Cad99C and consequently Cad99C-dependent endosome formation, which is essential for the Duox-dependent production of reactive oxygen species (ROS) in response to intestinal bacterial infection. The protein is 1-phosphatidylinositol 4,5-bisphosphate phosphodiesterase of Drosophila melanogaster (Fruit fly).